Here is a 550-residue protein sequence, read N- to C-terminus: Beta-fructofuranosidase, insoluble isoenzyme CWINV6 (550 aa).

Substrate contacts are provided by residues 28-31, glutamine 47, 92-93, 157-158, and glutamate 214; these read WLND, WS, and RD. Aspartate 31 is an active-site residue. N-linked (GlcNAc...) asparagine glycans are attached at residues asparagine 235 and asparagine 272.

This sequence belongs to the glycosyl hydrolase 32 family. In terms of tissue distribution, expressed in seedlings and leaves, and, to a lower extent, in flowers and seeds.

The protein localises to the secreted. The protein resides in the extracellular space. It is found in the apoplast. It localises to the cell wall. The enzyme catalyses Hydrolysis of terminal, non-reducing (2-&gt;1)- and (2-&gt;6)-linked beta-D-fructofuranose residues in fructans.. In terms of biological role, 6 and 1-fructan exohydrolase that can degrade both inulin and levan-type fructans, such as phlein, levan, neokestose, levanbiose, 6-kestose, 1-kestose, inulin, and 1,1-nystose. This is Beta-fructofuranosidase, insoluble isoenzyme CWINV6 (CWINV6) from Arabidopsis thaliana (Mouse-ear cress).